The sequence spans 389 residues: Alanine racemase 1 (389 aa).

Lys41 acts as the Proton acceptor; specific for D-alanine in catalysis. Lys41 carries the N6-(pyridoxal phosphate)lysine modification. Arg137 serves as a coordination point for substrate. Tyr266 acts as the Proton acceptor; specific for L-alanine in catalysis. Met313 provides a ligand contact to substrate.

This sequence belongs to the alanine racemase family. The cofactor is pyridoxal 5'-phosphate.

The enzyme catalyses L-alanine = D-alanine. It participates in amino-acid biosynthesis; D-alanine biosynthesis; D-alanine from L-alanine: step 1/1. In terms of biological role, catalyzes the interconversion of L-alanine and D-alanine. May also act on other amino acids. In Bacillus subtilis (strain 168), this protein is Alanine racemase 1 (alr1).